A 329-amino-acid chain; its full sequence is Adenylate isopentenyltransferase (329 aa).

ATP is bound by residues 37 to 44, Lys63, Thr74, 129 to 131, 220 to 222, and Lys313; these read GATGTGKS, SNS, and KAI.

The protein belongs to the IPP transferase family. Mg(2+) serves as cofactor. As to expression, expressed in roots, stems, leaves and cones.

It catalyses the reaction dimethylallyl diphosphate + AMP = N(6)-(dimethylallyl)adenosine 5'-phosphate + diphosphate. It carries out the reaction dimethylallyl diphosphate + ADP = N(6)-(dimethylallyl)adenosine 5'-diphosphate + diphosphate. The enzyme catalyses dimethylallyl diphosphate + ATP = N(6)-(dimethylallyl)adenosine 5'-triphosphate + diphosphate. Its function is as follows. Involved in cytokinin biosynthesis. Catalyzes the transfer of an isopentenyl group from dimethylallyl diphosphate (DMAPP) to ATP, ADP and AMP. GMP, IMP, CMP or UMP are not used as substrates. This is Adenylate isopentenyltransferase from Humulus lupulus (European hop).